The chain runs to 290 residues: Type II secretion system protein C (290 aa).

At 1–28 (MTLPFRNDLLSSLLARCKTVPLSRFSQP) the chain is on the cytoplasmic side. A helical membrane pass occupies residues 29–46 (LFWLLLLLLAHQCAGLTW). The Periplasmic segment spans residues 47–290 (RLLDLGSQQA…LYDVYVGLSE (244 aa)).

It belongs to the GSP C family.

The protein localises to the cell inner membrane. Involved in a type II secretion system (T2SS, formerly general secretion pathway, GSP) for the export of proteins. In Aeromonas hydrophila, this protein is Type II secretion system protein C (exeC).